A 198-amino-acid chain; its full sequence is Probable chemoreceptor glutamine deamidase CheD (198 aa).

It belongs to the CheD family.

It catalyses the reaction L-glutaminyl-[protein] + H2O = L-glutamyl-[protein] + NH4(+). Probably deamidates glutamine residues to glutamate on methyl-accepting chemotaxis receptors (MCPs), playing an important role in chemotaxis. The chain is Probable chemoreceptor glutamine deamidase CheD from Stenotrophomonas maltophilia (strain R551-3).